A 433-amino-acid chain; its full sequence is MLNIRKLSANADGFKAELEALLAWETVSNDSVNEIVKDVLKNVRERGDEALLEYTAKFDRLTLAKGSDLEIPKSELEAALKRIPKDQRDGLELSAQRVKDYHEKQVMKSWSYTEDDGTFLGQQVTCLDRVGLYVPGGKAAYPSSVIMNAIPAKVAGVPELIMVVPTPDGEVNDMVLAAAAICGVDRVFTLGGAQAVAALAYGTETVPPVDKVVGPGNIFVATAKREVFGTVGIDMIAGPSEILVYCDGKTNPDWIAMDLFSQAEHDEDAQSILVTQDAEFAEKVYLSMNKLVKTLPREEIITKAITDRGAIIVVDNEDQAIELINYIAPEHLELSIDEPKALLPKIKHAGAIFMGRFTAEALGDYCAGPNHVLPTSRTARFSSPLGVYDFQKRSSLIMCSAEGANMLGQVAGVLADGEGLQAHAASARYRVKD.

Residues Y133, Q194, and N217 each coordinate NAD(+). Residues S240, Q262, and H265 each coordinate substrate. The Zn(2+) site is built by Q262 and H265. Catalysis depends on proton acceptor residues E330 and H331. Substrate is bound by residues H331, D364, E418, and H423. D364 lines the Zn(2+) pocket. Zn(2+) is bound at residue H423.

This sequence belongs to the histidinol dehydrogenase family. Zn(2+) is required as a cofactor.

It catalyses the reaction L-histidinol + 2 NAD(+) + H2O = L-histidine + 2 NADH + 3 H(+). It participates in amino-acid biosynthesis; L-histidine biosynthesis; L-histidine from 5-phospho-alpha-D-ribose 1-diphosphate: step 9/9. In terms of biological role, catalyzes the sequential NAD-dependent oxidations of L-histidinol to L-histidinaldehyde and then to L-histidine. This is Histidinol dehydrogenase from Hydrogenovibrio crunogenus (strain DSM 25203 / XCL-2) (Thiomicrospira crunogena).